A 228-amino-acid chain; its full sequence is Cytochrome c oxidase subunit 2 (228 aa).

Over 1-26 (MATWNNLNLQNGASPLMEQIIFFHDH) the chain is Mitochondrial intermembrane. Residues 27 to 48 (TLIILIMITILVGYLMINLFFN) traverse the membrane as a helical segment. Residues 49-62 (KYINRFLLEGQMIE) lie on the Mitochondrial matrix side of the membrane. Residues 63–82 (LIWTILPAITLIFIALPSLR) form a helical membrane-spanning segment. Over 83–228 (LLYLLDELNN…FIKWINNYSS (146 aa)) the chain is Mitochondrial intermembrane. Cu cation-binding residues include His-161, Cys-196, Glu-198, Cys-200, His-204, and Met-207. Glu-198 lines the Mg(2+) pocket.

This sequence belongs to the cytochrome c oxidase subunit 2 family. As to quaternary structure, component of the cytochrome c oxidase (complex IV, CIV), a multisubunit enzyme composed of a catalytic core of 3 subunits and several supernumerary subunits. The complex exists as a monomer or a dimer and forms supercomplexes (SCs) in the inner mitochondrial membrane with ubiquinol-cytochrome c oxidoreductase (cytochrome b-c1 complex, complex III, CIII). Requires Cu cation as cofactor.

The protein resides in the mitochondrion inner membrane. The catalysed reaction is 4 Fe(II)-[cytochrome c] + O2 + 8 H(+)(in) = 4 Fe(III)-[cytochrome c] + 2 H2O + 4 H(+)(out). Its function is as follows. Component of the cytochrome c oxidase, the last enzyme in the mitochondrial electron transport chain which drives oxidative phosphorylation. The respiratory chain contains 3 multisubunit complexes succinate dehydrogenase (complex II, CII), ubiquinol-cytochrome c oxidoreductase (cytochrome b-c1 complex, complex III, CIII) and cytochrome c oxidase (complex IV, CIV), that cooperate to transfer electrons derived from NADH and succinate to molecular oxygen, creating an electrochemical gradient over the inner membrane that drives transmembrane transport and the ATP synthase. Cytochrome c oxidase is the component of the respiratory chain that catalyzes the reduction of oxygen to water. Electrons originating from reduced cytochrome c in the intermembrane space (IMS) are transferred via the dinuclear copper A center (CU(A)) of subunit 2 and heme A of subunit 1 to the active site in subunit 1, a binuclear center (BNC) formed by heme A3 and copper B (CU(B)). The BNC reduces molecular oxygen to 2 water molecules using 4 electrons from cytochrome c in the IMS and 4 protons from the mitochondrial matrix. The sequence is that of Cytochrome c oxidase subunit 2 (COII) from Yponomeuta malinellus (European small ermine moth).